Reading from the N-terminus, the 325-residue chain is Oligopeptide transport system permease protein OppB (325 aa).

Helical transmembrane passes span 12–32 (YLVL…LAFS), 102–122 (LVVG…WGAI), 135–155 (LALL…ILGA), 189–208 (LQHL…AGFS), 248–268 (IPMA…AVFV), and 290–310 (TNIV…AGLL). Positions 95-311 (IGVSLRLLVV…AVVLLAGLLS (217 aa)) constitute an ABC transmembrane type-1 domain.

The protein belongs to the binding-protein-dependent transport system permease family. OppBC subfamily. The complex is composed of an ATP-binding protein (OppD), two transmembrane proteins (OppB and OppC) and a solute-binding protein (OppA).

Its subcellular location is the cell inner membrane. Part of the ABC transporter complex OppABCD involved in the uptake of oligopeptides. Responsible for the translocation of the substrate across the membrane. This Mycobacterium bovis (strain ATCC BAA-935 / AF2122/97) protein is Oligopeptide transport system permease protein OppB.